We begin with the raw amino-acid sequence, 161 residues long: Cyclic pyranopterin monophosphate synthase (161 aa).

Substrate contacts are provided by residues 75 to 77 (MCH) and 115 to 116 (ME). Residue D130 is part of the active site.

It belongs to the MoaC family. As to quaternary structure, homohexamer; trimer of dimers.

The catalysed reaction is (8S)-3',8-cyclo-7,8-dihydroguanosine 5'-triphosphate = cyclic pyranopterin phosphate + diphosphate. It participates in cofactor biosynthesis; molybdopterin biosynthesis. In terms of biological role, catalyzes the conversion of (8S)-3',8-cyclo-7,8-dihydroguanosine 5'-triphosphate to cyclic pyranopterin monophosphate (cPMP). This is Cyclic pyranopterin monophosphate synthase from Bacillus cereus (strain G9842).